Reading from the N-terminus, the 271-residue chain is 3-methyl-2-oxobutanoate hydroxymethyltransferase (271 aa).

Residues Asp49 and Asp88 each coordinate Mg(2+). 3-methyl-2-oxobutanoate-binding positions include 49-50 (DS), Asp88, and Lys118. Glu120 is a binding site for Mg(2+). Glu187 functions as the Proton acceptor in the catalytic mechanism.

It belongs to the PanB family. In terms of assembly, homodecamer; pentamer of dimers. Mg(2+) is required as a cofactor.

The protein localises to the cytoplasm. The enzyme catalyses 3-methyl-2-oxobutanoate + (6R)-5,10-methylene-5,6,7,8-tetrahydrofolate + H2O = 2-dehydropantoate + (6S)-5,6,7,8-tetrahydrofolate. It functions in the pathway cofactor biosynthesis; (R)-pantothenate biosynthesis; (R)-pantoate from 3-methyl-2-oxobutanoate: step 1/2. Its function is as follows. Catalyzes the reversible reaction in which hydroxymethyl group from 5,10-methylenetetrahydrofolate is transferred onto alpha-ketoisovalerate to form ketopantoate. The protein is 3-methyl-2-oxobutanoate hydroxymethyltransferase of Bartonella bacilliformis (strain ATCC 35685 / KC583 / Herrer 020/F12,63).